We begin with the raw amino-acid sequence, 37 residues long: Large ribosomal subunit protein bL36 (37 aa).

It belongs to the bacterial ribosomal protein bL36 family.

This chain is Large ribosomal subunit protein bL36, found in Borreliella burgdorferi (strain ATCC 35210 / DSM 4680 / CIP 102532 / B31) (Borrelia burgdorferi).